The sequence spans 654 residues: tRNA 5-methylaminomethyl-2-thiouridine biosynthesis bifunctional protein MnmC (654 aa).

The tract at residues 1–236 is tRNA (mnm(5)s(2)U34)-methyltransferase; the sequence is MTDRIVPATL…KRAMLVGEFA (236 aa). Residues 260 to 654 form an FAD-dependent cmnm(5)s(2)U34 oxidoreductase region; it reads IGAGLAGCAA…IRALRRGRVA (395 aa).

It in the N-terminal section; belongs to the methyltransferase superfamily. tRNA (mnm(5)s(2)U34)-methyltransferase family. This sequence in the C-terminal section; belongs to the DAO family. Requires FAD as cofactor.

The protein resides in the cytoplasm. The catalysed reaction is 5-aminomethyl-2-thiouridine(34) in tRNA + S-adenosyl-L-methionine = 5-methylaminomethyl-2-thiouridine(34) in tRNA + S-adenosyl-L-homocysteine + H(+). Its function is as follows. Catalyzes the last two steps in the biosynthesis of 5-methylaminomethyl-2-thiouridine (mnm(5)s(2)U) at the wobble position (U34) in tRNA. Catalyzes the FAD-dependent demodification of cmnm(5)s(2)U34 to nm(5)s(2)U34, followed by the transfer of a methyl group from S-adenosyl-L-methionine to nm(5)s(2)U34, to form mnm(5)s(2)U34. The polypeptide is tRNA 5-methylaminomethyl-2-thiouridine biosynthesis bifunctional protein MnmC (Burkholderia thailandensis (strain ATCC 700388 / DSM 13276 / CCUG 48851 / CIP 106301 / E264)).